A 150-amino-acid polypeptide reads, in one-letter code: Large ribosomal subunit protein eL19 (150 aa).

The disordered stretch occupies residues 56–90; sequence RGISSGRLKERKHKRRSKGEGRKHGSRKGKSGART.

Belongs to the eukaryotic ribosomal protein eL19 family. Part of the 50S ribosomal subunit.

In terms of biological role, binds to the 23S rRNA. This chain is Large ribosomal subunit protein eL19, found in Sulfolobus acidocaldarius (strain ATCC 33909 / DSM 639 / JCM 8929 / NBRC 15157 / NCIMB 11770).